Consider the following 201-residue polypeptide: Auxin-binding protein 1 (201 aa).

The N-terminal stretch at 1–38 (MAPDLSELAAAAAARGAYLAGVGVAVLLAASFLPVAES) is a signal peptide. Residues Cys-40 and Cys-193 are joined by a disulfide bond. Positions 95, 97, and 101 each coordinate Zn(2+). An N-linked (GlcNAc...) asparagine glycan is attached at Asn-133. A Zn(2+)-binding site is contributed by His-144. A Prevents secretion from ER motif is present at residues 198 to 201 (KDEL).

In terms of assembly, homodimer. Glycosylated. As to expression, expressed in roots, coleoptiles, leaves, stems, tassels and ears.

It is found in the endoplasmic reticulum lumen. Functionally, receptor for the plant hormone auxin. The sequence is that of Auxin-binding protein 1 from Zea mays (Maize).